Reading from the N-terminus, the 1250-residue chain is DNA-directed RNA polymerase subunit beta'' (1250 aa).

4 residues coordinate Zn(2+): Cys-224, Cys-314, Cys-321, and Cys-324.

It belongs to the RNA polymerase beta' chain family. RpoC2 subfamily. In plastids the minimal PEP RNA polymerase catalytic core is composed of four subunits: alpha, beta, beta', and beta''. When a (nuclear-encoded) sigma factor is associated with the core the holoenzyme is formed, which can initiate transcription. It depends on Zn(2+) as a cofactor.

The protein resides in the plastid. Its subcellular location is the chloroplast. It catalyses the reaction RNA(n) + a ribonucleoside 5'-triphosphate = RNA(n+1) + diphosphate. DNA-dependent RNA polymerase catalyzes the transcription of DNA into RNA using the four ribonucleoside triphosphates as substrates. This is DNA-directed RNA polymerase subunit beta'' from Staurastrum punctulatum (Green alga).